The following is a 326-amino-acid chain: Probable oxidoreductase patJ (326 aa).

Positions 287–326 (HGVQPGSVNGSNGHSTGVESKLEQLGSRAQRRVVIDDAGK) are disordered. The segment covering 292–304 (GSVNGSNGHSTGV) has biased composition (polar residues).

Belongs to the oxidoreductase OpS7 family.

The protein localises to the vacuole lumen. Its subcellular location is the cytoplasmic vesicle lumen. Its pathway is mycotoxin biosynthesis; patulin biosynthesis. Functionally, probable oxidoreductase; part of the gene cluster that mediates the biosynthesis of patulin, an acetate-derived tetraketide mycotoxin produced by several fungal species that shows antimicrobial properties against several bacteria. PatJ acts with patO in the vacuole to convert gentisyl alcohol to isoepoxydon. The pathway begins with the synthesis of 6-methylsalicylic acid by the polyketide synthase (PKS) patK via condensation of acetate and malonate units. The 6-methylsalicylic acid decarboxylase patG then catalyzes the decarboxylation of 6-methylsalicylic acid to yield m-cresol (also known as 3-methylphenol). These first reactions occur in the cytosol. The intermediate m-cresol is then transported into the endoplasmic reticulum where the cytochrome P450 monooxygenase patH converts it to m-hydroxybenzyl alcohol, which is further converted to gentisyl alcohol by the cytochrome P450 monooxygenase patI. The oxidoreductases patJ and patO further convert gentisyl alcohol to isoepoxydon in the vacuole. PatN catalyzes then the transformation of isoepoxydon into phyllostine. The cluster protein patF is responsible for the conversion from phyllostine to neopatulin whereas the alcohol dehydrogenase patD converts neopatulin to E-ascladiol. The steps between isoepoxydon and E-ascladiol occur in the cytosol, and E-ascladiol is probably secreted to the extracellular space by one of the cluster-specific transporters patC or patM. Finally, the secreted patulin synthase patE catalyzes the conversion of E-ascladiol to patulin. In Penicillium expansum (Blue mold rot fungus), this protein is Probable oxidoreductase patJ.